A 502-amino-acid polypeptide reads, in one-letter code: Calnexin homolog (502 aa).

The N-terminal stretch at 1–19 (MKFSAYLWWLFLNLALVKG) is a signal peptide. At 20–481 (TSLLSNVTLA…IDRILEQPLK (462 aa)) the chain is on the lumenal side. N-linked (GlcNAc...) asparagine glycosylation is found at N25 and N104. C125 and C161 are joined by a disulfide. Positions 131 and 159 each coordinate an alpha-D-glucoside. The segment at 248 to 381 (IPDVSVAKPH…PEIENPLYYE (134 aa)) is p domain (Extended arm). Tandem repeats lie at residues 250–261 (DVSVAKPHDWDD), 267–278 (DPEAVKLSDRDE), 286–297 (HPDGTEPPEWNS), 305–316 (DPNAQKPSWWKE), and 320–330 (GEWIPPMIKNP). 4 X approximate repeats stretches follow at residues 250–316 (DVSV…WWKE) and 320–377 (GEWI…IENP). A glycan (N-linked (GlcNAc...) asparagine) is linked at N296. C332 and C338 are disulfide-bonded. 3 tandem repeats follow at residues 339–349 (GQQIPGLINNA), 353–363 (GPGELNEIINP), and 367–377 (GEWHPPEIENP). Position 398 (E398) interacts with an alpha-D-glucoside. Residues N416 and N425 are each glycosylated (N-linked (GlcNAc...) asparagine). Residues 482–502 (FVLTAAVVLLTTSVLCCVVFT) form a helical membrane-spanning segment.

This sequence belongs to the calreticulin family. As to quaternary structure, interacts with MPD1.

Its subcellular location is the endoplasmic reticulum membrane. Its function is as follows. Interacts with newly synthesized monoglucosylated glycoproteins in the endoplasmic reticulum. It may act in assisting protein assembly and/or in the retention within the ER of unassembled protein subunits. It seems to play a major role in the quality control apparatus of the ER by the retention of incorrectly folded proteins. The protein is Calnexin homolog (CNE1) of Saccharomyces cerevisiae (strain ATCC 204508 / S288c) (Baker's yeast).